We begin with the raw amino-acid sequence, 570 residues long: Glutamate--tRNA ligase (570 aa).

Positions Pro107–Ser117 match the 'HIGH' region motif.

The protein belongs to the class-I aminoacyl-tRNA synthetase family. Glutamate--tRNA ligase type 2 subfamily.

The protein resides in the cytoplasm. The enzyme catalyses tRNA(Glu) + L-glutamate + ATP = L-glutamyl-tRNA(Glu) + AMP + diphosphate. Functionally, catalyzes the attachment of glutamate to tRNA(Glu) in a two-step reaction: glutamate is first activated by ATP to form Glu-AMP and then transferred to the acceptor end of tRNA(Glu). This chain is Glutamate--tRNA ligase, found in Pyrobaculum islandicum (strain DSM 4184 / JCM 9189 / GEO3).